The sequence spans 118 residues: Ribonuclease P protein component (118 aa).

Belongs to the RnpA family. In terms of assembly, consists of a catalytic RNA component (M1 or rnpB) and a protein subunit.

The enzyme catalyses Endonucleolytic cleavage of RNA, removing 5'-extranucleotides from tRNA precursor.. RNaseP catalyzes the removal of the 5'-leader sequence from pre-tRNA to produce the mature 5'-terminus. It can also cleave other RNA substrates such as 4.5S RNA. The protein component plays an auxiliary but essential role in vivo by binding to the 5'-leader sequence and broadening the substrate specificity of the ribozyme. The sequence is that of Ribonuclease P protein component from Bifidobacterium animalis subsp. lactis (strain AD011).